The following is a 322-amino-acid chain: Basic 30 kDa endochitinase (322 aa).

A signal peptide spans 1 to 22; that stretch reads MRLSEFTTLFLLFSVLLLSASA. A Chitin-binding type-1 domain is found at 23 to 64; the sequence is EQCGSQAGGALCASGLCCSKFGWCGNTNEYCGPGNCQSQCPG. 4 disulfide bridges follow: cysteine 25-cysteine 40, cysteine 34-cysteine 46, cysteine 39-cysteine 53, and cysteine 58-cysteine 62. Residues proline 66 and proline 68 each carry the 4-hydroxyproline modification. 3 disulfides stabilise this stretch: cysteine 93/cysteine 156, cysteine 168/cysteine 176, and cysteine 275/cysteine 307. Glutamate 138 acts as the Proton donor in catalysis. Positions 316–322 are cleaved as a propeptide — removed in mature form; it reads GLLVDIM.

The protein belongs to the glycosyl hydrolase 19 family. Chitinase class I subfamily. In terms of processing, the 4-hydroxyproline residues are not glycosylated in this plant vacuolar protein.

Its subcellular location is the vacuole. The protein resides in the secreted. It localises to the cell wall. The catalysed reaction is Random endo-hydrolysis of N-acetyl-beta-D-glucosaminide (1-&gt;4)-beta-linkages in chitin and chitodextrins.. In terms of biological role, defense against chitin-containing fungal pathogens. The chain is Basic 30 kDa endochitinase (CHI9) from Solanum lycopersicum (Tomato).